The primary structure comprises 488 residues: Dipeptidase 3 (488 aa).

A signal peptide spans Met1–Val35. The segment covering Thr41 to Pro60 has biased composition (low complexity). The segment at Thr41 to Asp74 is disordered. Intrachain disulfides connect Cys143–Cys222 and Cys294–Cys326. N-linked (GlcNAc...) asparagine glycosylation occurs at Asn331. The GPI-anchor amidated serine moiety is linked to residue Ser459. A propeptide spans Lys460–His487 (removed in mature form).

It belongs to the metallo-dependent hydrolases superfamily. Peptidase M19 family. In terms of assembly, homodimer; disulfide-linked. Interacts with TEX101; co-localized on the cell surface of spermatocytes, spermatids, and testicular spermatozoa, co-localized only in cytoplasmic droplets of caput and corpus epididymal sperm.

It is found in the membrane. Its function is as follows. Lacks dipeptidase activity and is unable to hydrolyze cystinyl-bis-glycine, leukotriene D4 and the beta-lactam antibiotic imipenem. The absence of activity may be due to the inability of serine (instead of aspartate found in DPEP1/2) at position 356 to function as the acid/base catalyst and activate the nucleophilic water/hydroxide. The polypeptide is Dipeptidase 3 (Dpep3) (Rattus norvegicus (Rat)).